A 444-amino-acid polypeptide reads, in one-letter code: Structure-specific endonuclease subunit SLX1 (444 aa).

A GIY-YIG domain is found at 23–105 (AFSCCYLLRS…QNTKVSRHAD (83 aa)). The segment at 240–295 (CGVCKQRLILQHDIIAVCSHSSCHCAAHLSCLSSHFLKDKDSDSELVPREGTCPTC) adopts an SLX1-type zinc-finger fold. Residues 324-354 (RRQRAGTPKGQGLKSVRGRGHSEDENESDAL) form a disordered region.

This sequence belongs to the SLX1 family. As to quaternary structure, forms a heterodimer with SLX4. A divalent metal cation serves as cofactor.

It localises to the nucleus. Its function is as follows. Catalytic subunit of the SLX1-SLX4 structure-specific endonuclease that resolves DNA secondary structures generated during DNA repair and recombination. Has endonuclease activity towards branched DNA substrates, introducing single-strand cuts in duplex DNA close to junctions with ss-DNA. In Paracoccidioides lutzii (strain ATCC MYA-826 / Pb01) (Paracoccidioides brasiliensis), this protein is Structure-specific endonuclease subunit SLX1.